A 172-amino-acid polypeptide reads, in one-letter code: 3-hydroxydecanoyl-[acyl-carrier-protein] dehydratase (172 aa).

His-71 is an active-site residue.

Belongs to the thioester dehydratase family. FabA subfamily. In terms of assembly, homodimer.

It is found in the cytoplasm. The catalysed reaction is a (3R)-hydroxyacyl-[ACP] = a (2E)-enoyl-[ACP] + H2O. It carries out the reaction (3R)-hydroxydecanoyl-[ACP] = (2E)-decenoyl-[ACP] + H2O. It catalyses the reaction (2E)-decenoyl-[ACP] = (3Z)-decenoyl-[ACP]. The protein operates within lipid metabolism; fatty acid biosynthesis. Its function is as follows. Necessary for the introduction of cis unsaturation into fatty acids. Catalyzes the dehydration of (3R)-3-hydroxydecanoyl-ACP to E-(2)-decenoyl-ACP and then its isomerization to Z-(3)-decenoyl-ACP. Can catalyze the dehydratase reaction for beta-hydroxyacyl-ACPs with saturated chain lengths up to 16:0, being most active on intermediate chain length. This chain is 3-hydroxydecanoyl-[acyl-carrier-protein] dehydratase, found in Yersinia enterocolitica serotype O:8 / biotype 1B (strain NCTC 13174 / 8081).